We begin with the raw amino-acid sequence, 205 residues long: Holliday junction branch migration complex subunit RuvA (205 aa).

The domain I stretch occupies residues 1 to 63 (MIDFVEGTLS…EDAILLYGFA (63 aa)). The tract at residues 64 to 142 (TRDERDLFRK…GYTPSAILTV (79 aa)) is domain II. A flexible linker region spans residues 143–153 (AAGDLTAGEQA). Residues 153–205 (AVSALNEALDALTALGYSDGELQKIRNTLSEKSKEGDGVEKLIKQGLALLMRG) form a domain III region.

This sequence belongs to the RuvA family. In terms of assembly, homotetramer. Forms an RuvA(8)-RuvB(12)-Holliday junction (HJ) complex. HJ DNA is sandwiched between 2 RuvA tetramers; dsDNA enters through RuvA and exits via RuvB. An RuvB hexamer assembles on each DNA strand where it exits the tetramer. Each RuvB hexamer is contacted by two RuvA subunits (via domain III) on 2 adjacent RuvB subunits; this complex drives branch migration. In the full resolvosome a probable DNA-RuvA(4)-RuvB(12)-RuvC(2) complex forms which resolves the HJ.

The protein localises to the cytoplasm. In terms of biological role, the RuvA-RuvB-RuvC complex processes Holliday junction (HJ) DNA during genetic recombination and DNA repair, while the RuvA-RuvB complex plays an important role in the rescue of blocked DNA replication forks via replication fork reversal (RFR). RuvA specifically binds to HJ cruciform DNA, conferring on it an open structure. The RuvB hexamer acts as an ATP-dependent pump, pulling dsDNA into and through the RuvAB complex. HJ branch migration allows RuvC to scan DNA until it finds its consensus sequence, where it cleaves and resolves the cruciform DNA. This chain is Holliday junction branch migration complex subunit RuvA, found in Brevibacillus brevis (strain 47 / JCM 6285 / NBRC 100599).